A 180-amino-acid polypeptide reads, in one-letter code: NAD(P)H-quinone oxidoreductase subunit 6, chloroplastic (180 aa).

A run of 5 helical transmembrane segments spans residues 10-30 (LLLAPLTLSLIFGGIGVVLLT), 32-52 (IIYSALSLGLVLICISFFYII), 57-77 (FVAVAQILIYIGAVNILILFA), 102-122 (IVCTSLFCSLITIILNISWFG), and 153-173 (FLPFELISIILLVALIGAITI).

This sequence belongs to the complex I subunit 6 family. As to quaternary structure, NDH is composed of at least 16 different subunits, 5 of which are encoded in the nucleus.

The protein localises to the plastid. Its subcellular location is the chloroplast thylakoid membrane. The enzyme catalyses a plastoquinone + NADH + (n+1) H(+)(in) = a plastoquinol + NAD(+) + n H(+)(out). The catalysed reaction is a plastoquinone + NADPH + (n+1) H(+)(in) = a plastoquinol + NADP(+) + n H(+)(out). In terms of biological role, NDH shuttles electrons from NAD(P)H:plastoquinone, via FMN and iron-sulfur (Fe-S) centers, to quinones in the photosynthetic chain and possibly in a chloroplast respiratory chain. The immediate electron acceptor for the enzyme in this species is believed to be plastoquinone. Couples the redox reaction to proton translocation, and thus conserves the redox energy in a proton gradient. This is NAD(P)H-quinone oxidoreductase subunit 6, chloroplastic (ndhG) from Cryptomeria japonica (Japanese cedar).